The chain runs to 437 residues: Asparagine--tRNA ligase (437 aa).

This sequence belongs to the class-II aminoacyl-tRNA synthetase family. As to quaternary structure, homodimer.

Its subcellular location is the cytoplasm. The catalysed reaction is tRNA(Asn) + L-asparagine + ATP = L-asparaginyl-tRNA(Asn) + AMP + diphosphate + H(+). The protein is Asparagine--tRNA ligase of Symbiobacterium thermophilum (strain DSM 24528 / JCM 14929 / IAM 14863 / T).